The following is a 248-amino-acid chain: Agamous-like MADS-box protein AGL1 (248 aa).

Residues 18-72 (RGKIEIKRIENTTNRQVTFCKRRNGLLKKAYELSVLCDAEVALVIFSTRGRLYEY) form the MADS-box domain. Residues 102–192 (TQYYQQEASK…RAKIAEGARL (91 aa)) enclose the K-box domain.

As to quaternary structure, interacts with AGL15 and AGL16.

The protein localises to the nucleus. Functionally, probable transcription factor. Interacts genetically with TT16/AGL32 in a partially antagonistic manner during flower development. Is essential for the coordination of cell divisions in ovule, seed coat development and endosperm formation. The protein is Agamous-like MADS-box protein AGL1 (AGL1) of Arabidopsis thaliana (Mouse-ear cress).